The chain runs to 126 residues: Penicillinase repressor (126 aa).

The H-T-H motif DNA-binding region spans 7 to 71 (EISMAEWDVM…KSENIYFYSS (65 aa)). Positions 74 to 126 (KEDDIKMKTAKTFLNKLYGGDMKSLVLNFAKNEELNNKEIEELRDILNDISKK) are important for dimerization.

It belongs to the BlaI transcriptional regulatory family. Homodimer. In terms of processing, upon exposure to beta-lactams, the protease BlaR1 is activated and cleaves BlaI at a single site. This proteolytic cleavage impairs dimerization and abolishes repressor activity.

The protein localises to the cytoplasm. Its function is as follows. Transcriptional repressor that constitutively blocks expression of beta-lactamase. Binds DNA as a dimer. This Staphylococcus aureus protein is Penicillinase repressor (blaI).